Reading from the N-terminus, the 221-residue chain is Transcriptional regulatory protein QseB (221 aa).

Residues 2-116 (RILLIEDDNL…EVAARLQALI (115 aa)) enclose the Response regulatory domain. Asp51 bears the 4-aspartylphosphate mark. Residues 124-218 (HSVIEQAGVK…VHGVGYALGQ (95 aa)) constitute a DNA-binding region (ompR/PhoB-type).

In terms of processing, phosphorylated by QseC.

The protein localises to the cytoplasm. In terms of biological role, member of a two-component regulatory system QseB/QseC. The sequence is that of Transcriptional regulatory protein QseB (qseB) from Haemophilus influenzae (strain ATCC 51907 / DSM 11121 / KW20 / Rd).